A 623-amino-acid polypeptide reads, in one-letter code: Set1/Ash2 histone methyltransferase complex subunit ASH2 (623 aa).

The segment covering 1–18 (MAAAGAGPGPGVSAGPGP) has biased composition (gly residues). The PHD-type; atypical zinc finger occupies 1–62 (MAAAGAGPGP…SGEAESGDAN (62 aa)). Positions 1 to 99 (MAAAGAGPGP…MDTQAGSVDE (99 aa)) are disordered. Residues 36 to 56 (AAGAGEGPSAAPGAEPSSGEA) are compositionally biased toward low complexity. The DNA-binding stretch occupies residues 63–172 (LVDVSGLETE…MCLSALANLT (110 aa)). The span at 84–95 (GDTSEVMDTQAG) shows a compositional bias: polar residues. Residue Ser-96 is modified to Phosphoserine. The segment at 112–145 (CGICTKWFTADTFGIDTSSCLPFMTNYSFHCNVC) adopts a C4-type zinc-finger fold. Residues 230 to 247 (LVKEHPDPGSKDPEEDYP) show a composition bias toward basic and acidic residues. Residues 230–326 (LVKEHPDPGS…AQRLPPHGYP (97 aa)) are disordered. The span at 265 to 277 (NQKQSSAVSASGN) shows a compositional bias: polar residues. Positions 278–290 (LNGGIAAGSSGKG) are enriched in gly residues. Arg-291 is subject to Asymmetric dimethylarginine; by PRMT1 and PRMT5. Ser-311 carries the post-translational modification Phosphoserine. The interaction with RBBP5 stretch occupies residues 311 to 623 (SDPLFSAQRL…DGRRSPPWEP (313 aa)). Residues 355–578 (LDCWAGKPIP…VSINFGPSFK (224 aa)) form the B30.2/SPRY domain.

As to quaternary structure, interacts with HCFC1. Core component of several methyltransferase-containing complexes including MLL1/MLL, MLL2/3 (also named ASCOM complex) and MLL4/WBP7. Each complex is at least composed of ASH2L, RBBP5, WDR5, DPY30, one or more specific histone methyltransferases (KMT2A/MLL1, KMT2D/MLL2, KMT2C/MLL3 and KMT2B/MLL4), and the facultative components PAGR1, BACC1, CHD8, E2F6, HCFC1, HCFC2, HSP70, INO80C, KDM6A, KANSL1, LAS1L, MAX, MCRS1, MEN1, MGA, KAT8/MOF, NCOA6, PAXIP1/PTIP, PELP1, PHF20, PRP31, RING2, RUVB1/TIP49A, RUVB2/TIP49B, SENP3, TAF1, TAF4, TAF6, TAF7, TAF9, TEX10 and alpha- and beta-tubulin. Component of the SET1 complex, at least composed of the catalytic subunit (SETD1A or SETD1B), WDR5, WDR82, RBBP5, ASH2L/ASH2, CXXC1/CFP1, HCFC1 and DPY30. Found in a complex with RBBP5, ASH2L, DPY30, KMT2A, KMT2D and WDR5. Component of a histone methylation complex composed of at least ZNF335, RBBP5, ASH2L and WDR5; the complex may have histone H3-specific methyltransferase activity, however does not have specificity for 'Lys-4' of histone H3. Within the complex, interacts with ZNF335. Interacts with RBBP5. Components of this complex may associate with components of a nuclear receptor-mediated transcription complex to form a complex at least composed of ZNF335, HCFC1, CCAR2, EMSY, MKI67, RBBP5, ASH2L and WDR5. Within this complex also interacts with CCAR2 and EMSY. Interacts with DPY30. Interacts with SETD1A and SETD1B. Both monomethylated and dimethylated on arginine residues in the C-terminus. Arg-291 is the major site. Methylation is not required for nuclear localization, nor for MLL complex integrity or maintenance of global histone H3K4me3 levels. As to expression, ubiquitously expressed, with abundant expression in the heart, skeletal muscle and kidney. Low expression is seen in spleen, lung and testis.

It localises to the nucleus. Transcriptional regulator. Component or associated component of some histone methyltransferase complexes which regulates transcription through recruitment of those complexes to gene promoters. Component of the Set1/Ash2 histone methyltransferase (HMT) complex, a complex that specifically methylates 'Lys-4' of histone H3, but not if the neighboring 'Lys-9' residue is already methylated. As part of the MLL1/MLL complex it is involved in methylation and dimethylation at 'Lys-4' of histone H3. May play a role in hematopoiesis. In association with RBBP5 and WDR5, stimulates the histone methyltransferase activities of KMT2A, KMT2B, KMT2C, KMT2D, SETD1A and SETD1B. The polypeptide is Set1/Ash2 histone methyltransferase complex subunit ASH2 (Ash2l) (Mus musculus (Mouse)).